The chain runs to 83 residues: Turripeptide Lol11.1 (83 aa).

Positions 1 to 27 (MARQMMTVGCLILIVVLLDMMVPVFNT) are cleaved as a signal peptide.

This sequence belongs to the conopeptide I2-like superfamily. Contains 4 disulfide bonds. As to expression, expressed by the venom duct.

It is found in the secreted. Its function is as follows. Acts as a neurotoxin by inhibiting voltage-gated potassium channels (Kv). In Iotyrris olangoensis (Sea snail), this protein is Turripeptide Lol11.1.